The sequence spans 294 residues: Cytidine deaminase (294 aa).

2 consecutive CMP/dCMP-type deaminase domains span residues 48-168 (DDDA…FGPK) and 187-294 (ALTD…RITF). A substrate-binding site is contributed by 89-91 (NME). Residue histidine 102 participates in Zn(2+) binding. The active-site Proton donor is glutamate 104. The Zn(2+) site is built by cysteine 129 and cysteine 132.

It belongs to the cytidine and deoxycytidylate deaminase family. In terms of assembly, homodimer. Zn(2+) serves as cofactor.

The catalysed reaction is cytidine + H2O + H(+) = uridine + NH4(+). It carries out the reaction 2'-deoxycytidine + H2O + H(+) = 2'-deoxyuridine + NH4(+). Functionally, this enzyme scavenges exogenous and endogenous cytidine and 2'-deoxycytidine for UMP synthesis. In Serratia proteamaculans (strain 568), this protein is Cytidine deaminase.